A 93-amino-acid polypeptide reads, in one-letter code: Protein ea8.5 (93 aa).

The chain is Protein ea8.5 (ea8.5) from Escherichia phage lambda (Bacteriophage lambda).